A 202-amino-acid polypeptide reads, in one-letter code: Small ribosomal subunit protein uS5 (202 aa).

Over residues M1–G13 the composition is skewed to gly residues. The tract at residues M1–K31 is disordered. Positions S14 to S23 are enriched in basic and acidic residues. Positions Y34–V97 constitute an S5 DRBM domain.

This sequence belongs to the universal ribosomal protein uS5 family. As to quaternary structure, part of the 30S ribosomal subunit. Contacts proteins S4 and S8.

Its function is as follows. With S4 and S12 plays an important role in translational accuracy. In terms of biological role, located at the back of the 30S subunit body where it stabilizes the conformation of the head with respect to the body. This chain is Small ribosomal subunit protein uS5, found in Frankia casuarinae (strain DSM 45818 / CECT 9043 / HFP020203 / CcI3).